The primary structure comprises 334 residues: Flavonol synthase/flavanone 3-hydroxylase (334 aa).

One can recognise a Fe2OG dioxygenase domain in the interval 196 to 295 (DLVYLMKINY…RMSWPVFLEP (100 aa)). The Fe cation site is built by His-220, Asp-222, and His-276.

It belongs to the iron/ascorbate-dependent oxidoreductase family. It depends on Fe cation as a cofactor. The cofactor is L-ascorbate.

The protein resides in the cytoplasm. The enzyme catalyses a (2R,3R)-dihydroflavonol + 2-oxoglutarate + O2 = a flavonol + succinate + CO2 + H2O. It carries out the reaction a (2S)-flavan-4-one + 2-oxoglutarate + O2 = a (2R,3R)-dihydroflavonol + succinate + CO2. Its pathway is secondary metabolite biosynthesis; flavonoid biosynthesis. In terms of biological role, catalyzes the formation of flavonols from dihydroflavonols. It can act on dihydrokaempferol to produce kaempferol, on dihydroquercetin to produce quercitin and on dihydromyricetin to produce myricetin. The protein is Flavonol synthase/flavanone 3-hydroxylase (FLS) of Eustoma exaltatum subsp. russellianum (Bluebells).